The following is a 312-amino-acid chain: Malate dehydrogenase (312 aa).

Residues 7-13 (GAAGGIG) and Asp34 contribute to the NAD(+) site. The substrate site is built by Arg81 and Arg87. Residues Asn94 and 117 to 119 (ITN) contribute to the NAD(+) site. Positions 119 and 153 each coordinate substrate. His177 (proton acceptor) is an active-site residue. Residue Met227 coordinates NAD(+).

This sequence belongs to the LDH/MDH superfamily. MDH type 1 family. Homodimer.

It catalyses the reaction (S)-malate + NAD(+) = oxaloacetate + NADH + H(+). Functionally, catalyzes the reversible oxidation of malate to oxaloacetate. The chain is Malate dehydrogenase from Moritella marina (Vibrio marinus).